Here is a 636-residue protein sequence, read N- to C-terminus: MKSENQPEDKRIGKLKREANMQKMKEAAEVEEKKKEENEALVGFFHSYQELFQFFCNNTTIHGAIRLVCSKKNRMKTAFWSILFFFTFGLMYWQFGIIYREYFSFPVNLNLNLNSDRFTFPAVTLCTLNPYRYSALQNELAELDHITQKTLMDLYKYDMSQGQNNRKAQLSRKRSYRSLHYHVSRHPLHRYKRDSQASIEDNNTQVDKNDWKIAFSVCNENNTDCFKQMYSSGVDAVREWYSFHYINILSRIPNAKSLDESDFASFIYACRFNEVTCDKANYTHFHHPIYGNCYTFNANSSNLWMSSLPGINNGLSLVVRTEQNDFIPLLSTVTGARVMVHNQNEPAFMDEGGFNVRPGIETSISMRKETTNRLGGTYSDCTEDGSDVPVKNLYTSRYTEQVCIRSCFQNSIVERCGCGHYFYPLPSGAVYCDYAKHKAWGYCYYKLLAEFKADLLGCFTKCRKPCKVTEYQLSAGYSRWPSTASEAWVFHILSRQNQYNITSKRNGVAKVNIFFEQWNHKSNGESPAFTVVTLLSQLGSQWSLWFGSSVLSVVELVELILDFIAITCILAIHWLNMNRSSDLPIPTSNTTDTFHNVLPPPNTLPRASVDPDVITLPSYKSLESLDLRRVSSQQTE.

The tract at residues 1–28 is disordered; it reads MKSENQPEDKRIGKLKREANMQKMKEAA. Residues 1-77 lie on the Cytoplasmic side of the membrane; it reads MKSENQPEDK…VCSKKNRMKT (77 aa). The chain crosses the membrane as a helical span at residues 78-98; the sequence is AFWSILFFFTFGLMYWQFGII. Over 99-549 the chain is Extracellular; sequence YREYFSFPVN…SQWSLWFGSS (451 aa). Intrachain disulfides connect cysteine 126/cysteine 293, cysteine 218/cysteine 225, cysteine 270/cysteine 277, cysteine 381/cysteine 466, cysteine 403/cysteine 443, cysteine 403/cysteine 462, cysteine 407/cysteine 458, cysteine 416/cysteine 443, cysteine 416/cysteine 466, and cysteine 418/cysteine 432. The helical transmembrane segment at 550-570 threads the bilayer; the sequence is VLSVVELVELILDFIAITCIL. Residues 571 to 636 are Cytoplasmic-facing; that stretch reads AIHWLNMNRS…LRRVSSQQTE (66 aa).

It belongs to the amiloride-sensitive sodium channel (TC 1.A.6) family. SCNN1A subfamily. Heterotrimer; containing an alpha/SCNN1A, a beta/SCNN1B and a gamma/SCNN1G subunit.

The protein resides in the apical cell membrane. It is found in the cell projection. Its subcellular location is the cilium. It localises to the cytoplasmic granule. The protein localises to the cytoplasm. The protein resides in the cytoplasmic vesicle. It is found in the secretory vesicle. Its subcellular location is the acrosome. It localises to the flagellum. The enzyme catalyses Na(+)(in) = Na(+)(out). With respect to regulation, originally identified and characterized by its inhibition by the diuretic drug amiloride. This is one of the three pore-forming subunits of the heterotrimeric epithelial sodium channel (ENaC), a critical regulator of sodium balance and fluid homeostasis. ENaC operates in epithelial tissues, where it mediates the electrodiffusion of sodium ions from extracellular fluid through the apical membrane of cells, with water following osmotically. This chain is Epithelial sodium channel subunit alpha, found in Anolis carolinensis (Green anole).